The following is a 613-amino-acid chain: Protein starmaker (613 aa).

A signal peptide spans 1 to 20 (MLSRTVFVPLILAFVGVSIS). The segment at 42 to 613 (FTVQFNVGTP…DGRKTSMPIS (572 aa)) is disordered. Basic and acidic residues-rich tracts occupy residues 62-72 (DGKDSAEKNEA), 117-132 (SAEKRGEADGAPDKPD), 147-193 (DASH…KPEG), 206-284 (SAEK…KSDD), and 291-449 (DEQK…HSDS). A compositionally biased stretch (acidic residues) spans 450 to 465 (DSDSDSDSDSDSDSDS). 3 stretches are compositionally biased toward basic and acidic residues: residues 467 to 482 (SNSRDKDEKKDKSSES), 509 to 521 (DKDSSVEKDKTDS), and 538 to 554 (DDSKDATPSSEDHTAEK). Positions 555–573 (TDEDSHDVSDDDDDIDAHD) are enriched in acidic residues. Basic and acidic residues predominate over residues 574-607 (DEAGVEHGTDEASKPHQEPDHHDDTTHGSDDGRK).

The protein resides in the secreted. Functionally, essential for the formation of otoliths in the inner ear of developing larvae and for the perception of gravity and acceleration. May be one of the organic components of the ortholiths. The chain is Protein starmaker (stm) from Danio rerio (Zebrafish).